Consider the following 491-residue polypeptide: Beta-galactosidase (491 aa).

Glutamate 209 acts as the Proton donor in catalysis. The active-site Nucleophile is glutamate 389.

The protein belongs to the glycosyl hydrolase 1 family.

It carries out the reaction Hydrolysis of terminal non-reducing beta-D-galactose residues in beta-D-galactosides.. In Sulfolobus acidocaldarius (strain ATCC 33909 / DSM 639 / JCM 8929 / NBRC 15157 / NCIMB 11770), this protein is Beta-galactosidase (bgaS).